A 410-amino-acid chain; its full sequence is Solute carrier family 52, riboflavin transporter, member 3 (410 aa).

The next 3 helical transmembrane spans lie at 3-23 (ILIYALACAFGLGSWLAINGL), 40-60 (LPSYLTVIIQLANLGPLLVTL), and 73-93 (VVIYTILCIGVLACFLLAFFL). The N-linked (GlcNAc...) asparagine glycan is linked to Asn157. A run of 6 helical transmembrane segments spans residues 158-178 (FTTEVFFFFLAVMMCISLAAF), 239-259 (FQLTFIYLMVVWVNGTTNGLL), 277-297 (LSAALASVANPVACIVAMFFP), 301-321 (LVFLGLLCVMGTGFASYNMAM), 334-354 (ALGEAIIVLSWVFFTGSLSYV), and 369-389 (ALVWCGAAAQIGSLIGSVIMF).

Belongs to the riboflavin transporter family.

The protein localises to the cell membrane. The catalysed reaction is riboflavin(in) = riboflavin(out). Functionally, plasma membrane transporter mediating the uptake by cells of the water soluble vitamin B2/riboflavin that plays a key role in biochemical oxidation-reduction reactions of the carbohydrate, lipid, and amino acid metabolism. This Osmerus mordax (Rainbow smelt) protein is Solute carrier family 52, riboflavin transporter, member 3 (slc52a3).